The following is a 384-amino-acid chain: Involucrin (384 aa).

Positions 1–384 are disordered; that stretch reads MSQQHTLPVT…LPEQPQEPEV (384 aa). Composition is skewed to basic and acidic residues over residues 56–65 and 80–134; these read PSKHEEKGTD and PELH…ELHL. Residues 137-146 show a composition bias toward low complexity; sequence QQQQESQEQE. Residues 179-208 show a composition bias toward basic and acidic residues; it reads KQREPQESQEQRLHLGKEQESQEQRLHLGE. A compositionally biased stretch (low complexity) spans 239–267; that stretch reads PEQRLQLLPQGPQEQELHLGKQQQQQESQ. 2 stretches are compositionally biased toward basic and acidic residues: residues 268–308 and 315–336; these read QHQE…KKLL and EAVKRHEQLQRDEQFGMKKEQL.

The protein belongs to the involucrin family. In terms of assembly, directly or indirectly cross-linked to cornifelin (CNFN). Post-translationally, substrate of transglutaminase. Specific glutamines or lysines are cross-linked to keratins, desmoplakin and to inter involucrin molecules. Keratinocytes of epidermis and other stratified squamous epithelia.

Its subcellular location is the cytoplasm. Its function is as follows. Part of the insoluble cornified cell envelope (CE) of stratified squamous epithelia. The chain is Involucrin (IVL) from Otolemur crassicaudatus (Brown greater galago).